Reading from the N-terminus, the 389-residue chain is Probable nitrate transporter NarT (389 aa).

The next 12 membrane-spanning stretches (helical) occupy residues 14 to 34, 45 to 65, 69 to 89, 97 to 117, 139 to 159, 161 to 181, 211 to 231, 246 to 266, 268 to 288, 294 to 314, 331 to 351, and 353 to 373; these read TLSLVVGFMAWSIIAPLMPFI, ISIILAIPVILGSVLRVPFGY, IVGAKWVFFTSFIVLLFPIFF, GMLMASGFFLGVGGAIFSVGV, GNIGTAVSSFLAPPIAGIIGW, TTVRSYLIIIALFALIMFIFG, WYFITFGAFVAFGIFLPNYLV, GVFIALATFLRPIGGILGDKF, AVKVLMIDFVIMIIGAVILGI, LFTVGCLTISICAGIGNGLIF, IVSMMGGLGGFFPPLVITYVA, and LTGSSHLAFIFLAVFGCIALF.

It belongs to the major facilitator superfamily. Nitrate/nitrite porter (TC 2.A.1.8) family.

It localises to the cell membrane. Functionally, probably required for nitrate uptake under anoxic conditions. Also possibly involved in excretion of nitrite produced by the dissimilatory reduction of nitrate. The sequence is that of Probable nitrate transporter NarT (narT) from Staphylococcus aureus (strain JH9).